A 65-amino-acid polypeptide reads, in one-letter code: Large ribosomal subunit protein bL35 (65 aa).

Positions 1 to 23 (MPKMKSNRGAAKRFKRTGSGKFK) are disordered. The span at 10–23 (AAKRFKRTGSGKFK) shows a compositional bias: basic residues.

This sequence belongs to the bacterial ribosomal protein bL35 family.

In Acidithiobacillus ferrooxidans (strain ATCC 53993 / BNL-5-31) (Leptospirillum ferrooxidans (ATCC 53993)), this protein is Large ribosomal subunit protein bL35.